A 133-amino-acid chain; its full sequence is Helix-loop-helix protein 1 (133 aa).

The interval methionine 1–threonine 78 is disordered. A compositionally biased stretch (gly residues) spans aspartate 25–aspartate 39. Basic and acidic residues predominate over residues glutamate 52–glutamate 65. Basic residues predominate over residues arginine 66–threonine 78. Residues lysine 75–leucine 127 enclose the bHLH domain.

In terms of assembly, efficient DNA binding requires dimerization with another bHLH protein.

Its subcellular location is the nucleus. In terms of biological role, may serve as DNA-binding protein and may be involved in the control of cell-type determination, possibly within the developing nervous system. In Mus musculus (Mouse), this protein is Helix-loop-helix protein 1 (Nhlh1).